Consider the following 580-residue polypeptide: Bifunctional lycopene cyclase/phytoene synthase (580 aa).

Helical transmembrane passes span 3–23, 35–55, and 65–85; these read WEYAQVHLKYTIPFGVVLAAV, KLVFLITVAVVSTIPWDSYLI, and GVVVGLTAWDIPAEELFFFVI. Asn89 carries an N-linked (GlcNAc...) asparagine glycan. 4 consecutive transmembrane segments (helical) span residues 116–136, 139–159, 171–191, and 214–234; these read IAGQILFASAIIFGLVSVSSG, GMYMGLILIWACPFLLFLWSI, NTALPIALPTLYLWVVDTFAL, and IEEAVFFLLTNTLIVFGLIAC.

This sequence in the N-terminal section; belongs to the lycopene beta-cyclase family. The protein in the C-terminal section; belongs to the phytoene/squalene synthase family.

The protein resides in the membrane. The enzyme catalyses all-trans-lycopene = gamma-carotene. The catalysed reaction is gamma-carotene = all-trans-beta-carotene. It catalyses the reaction 2 (2E,6E,10E)-geranylgeranyl diphosphate = 15-cis-phytoene + 2 diphosphate. Its pathway is carotenoid biosynthesis; beta-carotene biosynthesis. The protein operates within carotenoid biosynthesis; phytoene biosynthesis; all-trans-phytoene from geranylgeranyl diphosphate: step 1/1. Its function is as follows. Bifunctional enzyme; part of the car gene cluster that mediates the biosynthesis of neurosporaxanthin, a carboxylic apocarotenoid acting as an essential protective pigments and leading to orange pigmentation. CarAR catalyzes the first step of the pathway by converting geranylgeranyl diphosphate to phytoene, as well as the later cyclization step that transforms the carB product lycopene into gamma-carotene. CarAR also converts part of gamma-carotene into beta-carotene. Neurosporaxanthin is synthesized from geranyl-geranyl pyrophosphate (GGPP) through several enzymatic activities. Phytoene synthase activity performed by the bifunctional enzyme carAR first produces phytoene from geranyl-geranyl pyrophosphate (GGPP). The phytoene dehydrogenase carB then introduces 4 desaturations to lead to lycopene which is substrate of the carotene cyclase activity of carAR that leads to the production of gamma-carotene. CarB then performs a 5th desaturation reaction to yield torulene. Torulene is the substrate of the dioxidase carT that breaks the molecule, removing five carbon atoms to yield beta-apo-4'-carotenal, whereas the aldehyde dehydrogenase carD mediates the last step by converting beta-apo-4'-carotenal into neurosporaxanthin. This is Bifunctional lycopene cyclase/phytoene synthase from Gibberella fujikuroi (strain CBS 195.34 / IMI 58289 / NRRL A-6831) (Bakanae and foot rot disease fungus).